Consider the following 345-residue polypeptide: N(4)-(Beta-N-acetylglucosaminyl)-L-asparaginase (345 aa).

A signal peptide spans 1 to 23 (MARKWNLPFLLLPLVLGIPLVRG). Asn38 is a glycosylation site (N-linked (GlcNAc...) asparagine). Cys64 and Cys69 are oxidised to a cystine. A glycan (N-linked (GlcNAc...) asparagine) is linked at Asn149. Cys163 and Cys179 form a disulfide bridge. The active-site Nucleophile is the Thr205. Residues 233–236 (RVGD) and 256–259 (TGDG) each bind substrate. Cys285 and Cys305 are disulfide-bonded. N-linked (GlcNAc...) asparagine glycosylation is present at Asn307. Cys316 and Cys344 are disulfide-bonded.

Belongs to the Ntn-hydrolase family. Heterotetramer of two alpha and two beta chains arranged as a dimer of alpha/beta heterodimers. Post-translationally, N-glycosylated. Cleaved into an alpha and beta chain by autocatalysis; this activates the enzyme. The N-terminal residue of the beta subunit is responsible for the nucleophile hydrolase activity.

It is found in the lysosome. The enzyme catalyses N(4)-(beta-N-acetyl-D-glucosaminyl)-L-asparagine + H2O = N-acetyl-beta-D-glucosaminylamine + L-aspartate + H(+). Its function is as follows. Cleaves the GlcNAc-Asn bond which joins oligosaccharides to the peptide of asparagine-linked glycoproteins. The chain is N(4)-(Beta-N-acetylglucosaminyl)-L-asparaginase (Aga) from Rattus norvegicus (Rat).